The sequence spans 347 residues: Metacaspase-2 (347 aa).

The propeptide occupies 1–55; the sequence is MCSLITQLCDAGQLADYVGLGWLNAVSSQPYLVQALGLQPPPRRVDVDAAFRDAK. Positions 1-70 are regulates substrate access to the active site; that stretch reads MCSLITQLCD…QPWVATPLPG (70 aa). Residue histidine 158 is part of the active site. Residues aspartate 173, aspartate 189, and aspartate 190 each contribute to the Ca(2+) site. Cysteine 213 is an active-site residue. Position 220 (aspartate 220) interacts with Ca(2+).

The protein belongs to the peptidase C14B family. In terms of assembly, monomer. Post-translationally, auto-proteolytic cleavage of the propeptide after Lys-55 and between the large and small subunits after Lys-268 is required for catalytic activity towards large protein substrates but is dispensable towards small oligopeptide substrates. After processing, the propeptide and the large and small subunits remain associated by non-covalent bonds. In vivo, the unprocessed enzyme appears to be the predominant form.

Its subcellular location is the recycling endosome. Activated by Ca(2+). In response to calcium binding, the 280-loop, a disordered loop consisting of residues 269-275, undergoes a conformational change which stabilizes substrates in the active site. The binding to the substrate triggers the release of the N-terminal region resulting in the activation of the enzyme. Proteolytic cleavage is required for catalytic activity towards large protein substrates. Its function is as follows. Cysteine protease that cleaves specifically after arginine or lysine residues. This chain is Metacaspase-2, found in Trypanosoma brucei brucei (strain 927/4 GUTat10.1).